The primary structure comprises 807 residues: Glycerol-3-phosphate acyltransferase (807 aa).

The HXXXXD motif signature appears at 308–313 (CHRSHM).

Belongs to the GPAT/DAPAT family.

It localises to the cell inner membrane. It carries out the reaction sn-glycerol 3-phosphate + an acyl-CoA = a 1-acyl-sn-glycero-3-phosphate + CoA. Its pathway is phospholipid metabolism; CDP-diacylglycerol biosynthesis; CDP-diacylglycerol from sn-glycerol 3-phosphate: step 1/3. The chain is Glycerol-3-phosphate acyltransferase from Shewanella sp. (strain ANA-3).